The sequence spans 77 residues: RNA-binding protein Hfq (77 aa).

The Sm domain maps to 10-70 (DAFLNHVRKT…ISTVMPAQPI (61 aa)).

This sequence belongs to the Hfq family. As to quaternary structure, homohexamer.

In terms of biological role, RNA chaperone that binds small regulatory RNA (sRNAs) and mRNAs to facilitate mRNA translational regulation in response to envelope stress, environmental stress and changes in metabolite concentrations. Also binds with high specificity to tRNAs. The polypeptide is RNA-binding protein Hfq (Jannaschia sp. (strain CCS1)).